Reading from the N-terminus, the 364-residue chain is MAQQTPLYEQHTLCGARMVDFHGWMMPLHYGSQIDEHHAVRTDAGMFDVSHMTIVDLRGSRTREFLRYLLANDVAKLKTPGKALYSGMLNASGGVIDDLIVYYFTEDFFRLVVNSATREKDLSWISQHAEKYAVEITVRDDLSLIAVQGPNAQAKAATLFTDEQRHATEGMKPFFGVQAGDLFIATTGYTGEAGYEIAMPNEKAAEFWHALVEAGVKPAGLGARDTLRLEAGMNLYSQEMDETVSPLAANMGWTIAWEPADREFIGREALEMQREKGTDQLVGLVMTEKGVLRNELPVRFTDELGNQREGMITSGTFSPTLGYSIALARVPAGIGETAIVQIRNREMPVNVTKPIFVRAGKPVA.

The protein belongs to the GcvT family. The glycine cleavage system is composed of four proteins: P, T, L and H.

It catalyses the reaction N(6)-[(R)-S(8)-aminomethyldihydrolipoyl]-L-lysyl-[protein] + (6S)-5,6,7,8-tetrahydrofolate = N(6)-[(R)-dihydrolipoyl]-L-lysyl-[protein] + (6R)-5,10-methylene-5,6,7,8-tetrahydrofolate + NH4(+). Its function is as follows. The glycine cleavage system catalyzes the degradation of glycine. This chain is Aminomethyltransferase, found in Enterobacter sp. (strain 638).